We begin with the raw amino-acid sequence, 218 residues long: Small ribosomal subunit protein uS3c (218 aa).

Residues 47-118 (VQNNIRISSG…KLNIAITRIS (72 aa)) form the KH type-2 domain.

Belongs to the universal ribosomal protein uS3 family. In terms of assembly, part of the 30S ribosomal subunit.

It is found in the plastid. Its subcellular location is the chloroplast. This chain is Small ribosomal subunit protein uS3c (rps3), found in Draba nemorosa (Woodland whitlowgrass).